The following is a 120-amino-acid chain: Cytochrome c-550 (120 aa).

A helical membrane pass occupies residues 5–25; the sequence is PLIPFLLIAVLGIGLTFFLSV. Residues 26 to 120 are Periplasmic-facing; it reads KGLDDSREIA…DMAEWVSKIK (95 aa). Heme c is bound by residues Cys60, Cys63, His64, and Met99.

Post-translationally, binds 1 heme c group covalently per subunit.

Its subcellular location is the cell membrane. Not essential for growth on minimal or rich media. This Bacillus subtilis (strain 168) protein is Cytochrome c-550 (cccA).